A 196-amino-acid polypeptide reads, in one-letter code: MIEYIKGEIVELTPTRMILECGGIGYELNISLNTYSAFGNKTTGKIYIYEVIREDAHLLFGFAEKIERELFLLLTSVSGVGPNTARMILSSLPPSELVQVIGSKNEAALTAVKGIGLKTAQRILVDLKNKVKPMESMAGNLPEASVSNGAVTEEAVAALVMLGFQKAASQKAVSAILKGSPTLAVEQVIKTALRML.

The segment at methionine 1–alanine 63 is domain I. A domain II region spans residues glutamate 64–proline 142. A flexible linker region spans residues proline 142–valine 146. The interval serine 147–leucine 196 is domain III.

Belongs to the RuvA family. In terms of assembly, homotetramer. Forms an RuvA(8)-RuvB(12)-Holliday junction (HJ) complex. HJ DNA is sandwiched between 2 RuvA tetramers; dsDNA enters through RuvA and exits via RuvB. An RuvB hexamer assembles on each DNA strand where it exits the tetramer. Each RuvB hexamer is contacted by two RuvA subunits (via domain III) on 2 adjacent RuvB subunits; this complex drives branch migration. In the full resolvosome a probable DNA-RuvA(4)-RuvB(12)-RuvC(2) complex forms which resolves the HJ.

It is found in the cytoplasm. In terms of biological role, the RuvA-RuvB-RuvC complex processes Holliday junction (HJ) DNA during genetic recombination and DNA repair, while the RuvA-RuvB complex plays an important role in the rescue of blocked DNA replication forks via replication fork reversal (RFR). RuvA specifically binds to HJ cruciform DNA, conferring on it an open structure. The RuvB hexamer acts as an ATP-dependent pump, pulling dsDNA into and through the RuvAB complex. HJ branch migration allows RuvC to scan DNA until it finds its consensus sequence, where it cleaves and resolves the cruciform DNA. The protein is Holliday junction branch migration complex subunit RuvA of Parabacteroides distasonis (strain ATCC 8503 / DSM 20701 / CIP 104284 / JCM 5825 / NCTC 11152).